The sequence spans 394 residues: Ceramide glucosyltransferase (394 aa).

Residues 1 to 10 (MALLDLALEG) are Lumenal-facing. A helical transmembrane segment spans residues 11–32 (MAVFGFVLFLVLWLMHFMAIIY). At 33–195 (TRLHLNKKAT…QVYFGTSHPR (163 aa)) the chain is on the cytoplasmic side. Position 92 (Asp-92) is a short sequence motif, D1. Lys-117 is subject to N6-acetyllysine. Asp-144 is a short sequence motif (D2). A helical membrane pass occupies residues 196–215 (YYISANVTGFKCVTGMSCLM). Residues 216–287 (RKDVLDQAGG…KLRINMLPAT (72 aa)) lie on the Lumenal side of the membrane. Asp-236 is a short sequence motif (D3). The active-site Proton acceptor is the Asp-236. The short motif at 272–276 (RMIRW) is the (Q/R)XXRW element. A helical membrane pass occupies residues 288 to 304 (IICEPISECFVASLIIG). Over 305–309 (WAAHH) the chain is Cytoplasmic. A helical membrane pass occupies residues 310-328 (VFRWDIMVFFMCHCLAWFI). Topologically, residues 329 to 348 (FDYIQLRGVQGGTLCFSKLD) are lumenal. Residues 349 to 369 (YAVAWFIRESMTIYIFLSALW) form a helical membrane-spanning segment. The Cytoplasmic portion of the chain corresponds to 370 to 394 (DPTISWRTGRYRLRCGGTAEEILDV).

The protein belongs to the glycosyltransferase 2 family. Interacts with RTN1; regulates the ceramide glucosyltransferase activity of UGCG. In terms of tissue distribution, found in all tissues examined.

Its subcellular location is the golgi apparatus membrane. It carries out the reaction an N-acylsphing-4-enine + UDP-alpha-D-glucose = a beta-D-glucosyl-(1&lt;-&gt;1')-N-acylsphing-4-enine + UDP + H(+). The catalysed reaction is UDP-alpha-D-xylose + an N-acylsphing-4-enine = a beta-D-xylosyl-(1&lt;-&gt;1')-N-acylsphing-4-enine + UDP + H(+). The enzyme catalyses N-(9Z-octadecenoyl)-sphing-4-enine + UDP-alpha-D-xylose = beta-D-xylosyl-(1&lt;-&gt;1')-N-(9Z-octadecenoyl)-sphing-4-enine + UDP + H(+). It functions in the pathway lipid metabolism; sphingolipid metabolism. Functionally, participates in the initial step of the glucosylceramide-based glycosphingolipid/GSL synthetic pathway at the cytosolic surface of the Golgi. Catalyzes the transfer of glucose from UDP-glucose to ceramide to produce glucosylceramide/GlcCer (such as beta-D-glucosyl-(1&lt;-&gt;1')-N-acylsphing-4-enine). GlcCer is the core component of glycosphingolipids/GSLs, amphipathic molecules consisting of a ceramide lipid moiety embedded in the outer leaflet of the membrane, linked to one of hundreds of different externally oriented oligosaccharide structures. Glycosphingolipids are essential components of membrane microdomains that mediate membrane trafficking and signal transduction, implicated in many fundamental cellular processes, including growth, differentiation, migration, morphogenesis, cell-to-cell and cell-to-matrix interactions. They are required for instance in the proper development and functioning of the nervous system. As an example of their role in signal transduction, they regulate the leptin receptor/LEPR in the leptin-mediated signaling pathway. They also play an important role in the establishment of the skin barrier regulating keratinocyte differentiation and the proper assembly of the cornified envelope. The biosynthesis of GSLs is also required for the proper intestinal endocytic uptake of nutritional lipids. Catalyzes the synthesis of xylosylceramide/XylCer (such as beta-D-xylosyl-(1&lt;-&gt;1')-N-acylsphing-4-enine) using UDP-Xyl as xylose donor. The polypeptide is Ceramide glucosyltransferase (Homo sapiens (Human)).